The primary structure comprises 596 residues: Inactive metallocarboxypeptidase ECM14 (596 aa).

The first 22 residues, 1 to 22 (MHFSVRLSLFLTLASSLPLVSA), serve as a signal peptide directing secretion. The propeptide occupies 23-184 (VPQHEDQAYT…QTIYESYPKA (162 aa)). The disordered stretch occupies residues 181–210 (YPKAGSAPPSQQGPTTRRFSPSASTSKSKP). A compositionally biased stretch (polar residues) spans 188 to 207 (PPSQQGPTTRRFSPSASTSK). In terms of domain architecture, Peptidase M14 spans 220 to 546 (DYQPLSVLLP…RAMVAMGKFL (327 aa)). 2 residues coordinate Zn(2+): His-285 and Glu-288. Substrate is bound by residues 285 to 288 (HARE), Arg-343, and 360 to 361 (DH). Cys-354 and Cys-377 form a disulfide bridge. Residue Asn-370 is glycosylated (N-linked (GlcNAc...) asparagine). His-417 is a Zn(2+) binding site. 418 to 419 (SY) contributes to the substrate binding site. The segment at 557–596 (DGLRASEEPQDYDNDLEDGEDDKDEQDSTVFRAQADDLQS) is disordered. Residues 564-583 (EPQDYDNDLEDGEDDKDEQD) are compositionally biased toward acidic residues.

Belongs to the peptidase M14 family. Requires Zn(2+) as cofactor.

It localises to the vacuole. The protein resides in the secreted. Inactive carboxypeptidase that may play a role in cell wall organization and biogenesis. In Trichophyton verrucosum (strain HKI 0517), this protein is Inactive metallocarboxypeptidase ECM14 (ECM14).